Reading from the N-terminus, the 155-residue chain is Aspartate carbamoyltransferase regulatory chain (155 aa).

Zn(2+) contacts are provided by cysteine 111, cysteine 116, cysteine 137, and cysteine 140.

It belongs to the PyrI family. In terms of assembly, contains catalytic and regulatory chains. Zn(2+) serves as cofactor.

Its function is as follows. Involved in allosteric regulation of aspartate carbamoyltransferase. The protein is Aspartate carbamoyltransferase regulatory chain of Haloarcula marismortui (strain ATCC 43049 / DSM 3752 / JCM 8966 / VKM B-1809) (Halobacterium marismortui).